A 187-amino-acid chain; its full sequence is Adenine phosphoribosyltransferase 1 (187 aa).

Serine 68 carries the post-translational modification Phosphoserine. Position 133 to 137 (133 to 137 (ATGGS)) interacts with AMP.

This sequence belongs to the purine/pyrimidine phosphoribosyltransferase family. Homodimer. The cofactor is Mg(2+).

The protein resides in the cytoplasm. The protein localises to the nucleus. The enzyme catalyses AMP + diphosphate = 5-phospho-alpha-D-ribose 1-diphosphate + adenine. The protein operates within purine metabolism; AMP biosynthesis via salvage pathway; AMP from adenine: step 1/1. Catalyzes a salvage reaction resulting in the formation of AMP, that is energically less costly than de novo synthesis. The chain is Adenine phosphoribosyltransferase 1 from Saccharomyces cerevisiae (strain ATCC 204508 / S288c) (Baker's yeast).